We begin with the raw amino-acid sequence, 832 residues long: FAST kinase domain-containing protein 1, mitochondrial (832 aa).

The 61-residue stretch at 765-825 folds into the RAP domain; the sequence is VAIEFLDSKA…KDAWMDYLRK (61 aa).

This sequence belongs to the FAST kinase family.

It is found in the mitochondrion. In terms of biological role, may regulate the stability of some mitochondrial mRNA species. This Xenopus laevis (African clawed frog) protein is FAST kinase domain-containing protein 1, mitochondrial (fastkd1).